The chain runs to 161 residues: RNA pyrophosphohydrolase (161 aa).

Positions 12 to 154 (PYRPGVGMMI…KRKLYQAVVK (143 aa)) constitute a Nudix hydrolase domain. A Nudix box motif is present at residues 46 to 67 (GGIVPGETPSIAAMREMLEEIG).

Belongs to the Nudix hydrolase family. RppH subfamily. It depends on a divalent metal cation as a cofactor.

Functionally, accelerates the degradation of transcripts by removing pyrophosphate from the 5'-end of triphosphorylated RNA, leading to a more labile monophosphorylated state that can stimulate subsequent ribonuclease cleavage. This chain is RNA pyrophosphohydrolase, found in Rickettsia rickettsii (strain Iowa).